A 464-amino-acid chain; its full sequence is Chromosomal replication initiator protein DnaA (464 aa).

The segment at 1–82 (MSLSLWQQCL…LLRFEVGSKP (82 aa)) is domain I, interacts with DnaA modulators. Residues 82-127 (PPQMAVLQPASQHASEAPSQAAVARPRPSRPSWDNAPVQPELSYRS) form a domain II region. The segment at 91 to 118 (ASQHASEAPSQAAVARPRPSRPSWDNAP) is disordered. The interval 128–344 (NVNPKHNFDN…GALNRVIANA (217 aa)) is domain III, AAA+ region. The ATP site is built by G172, G174, K175, and T176. Residues 345 to 464 (NFTGRAITID…FSNLIRTLSS (120 aa)) are domain IV, binds dsDNA.

This sequence belongs to the DnaA family. In terms of assembly, oligomerizes as a right-handed, spiral filament on DNA at oriC.

The protein localises to the cytoplasm. In terms of biological role, plays an essential role in the initiation and regulation of chromosomal replication. ATP-DnaA binds to the origin of replication (oriC) to initiate formation of the DNA replication initiation complex once per cell cycle. Binds the DnaA box (a 9 base pair repeat at the origin) and separates the double-stranded (ds)DNA. Forms a right-handed helical filament on oriC DNA; dsDNA binds to the exterior of the filament while single-stranded (ss)DNA is stabiized in the filament's interior. The ATP-DnaA-oriC complex binds and stabilizes one strand of the AT-rich DNA unwinding element (DUE), permitting loading of DNA polymerase. After initiation quickly degrades to an ADP-DnaA complex that is not apt for DNA replication. Binds acidic phospholipids. This chain is Chromosomal replication initiator protein DnaA, found in Sodalis glossinidius (strain morsitans).